A 393-amino-acid chain; its full sequence is Formate-dependent phosphoribosylglycinamide formyltransferase (393 aa).

N(1)-(5-phospho-beta-D-ribosyl)glycinamide-binding positions include 22–23 (EL) and glutamate 82. ATP-binding positions include arginine 114, lysine 155, 160 to 165 (SSGKGQ), 195 to 198 (EGLV), and glutamate 203. In terms of domain architecture, ATP-grasp spans 119–308 (RLAAETLQLP…EFALHVRAFL (190 aa)). Mg(2+) is bound by residues glutamate 267 and glutamate 279. Residues aspartate 286, lysine 355, and 362 to 363 (RR) each bind N(1)-(5-phospho-beta-D-ribosyl)glycinamide.

This sequence belongs to the PurK/PurT family. Homodimer.

It carries out the reaction N(1)-(5-phospho-beta-D-ribosyl)glycinamide + formate + ATP = N(2)-formyl-N(1)-(5-phospho-beta-D-ribosyl)glycinamide + ADP + phosphate + H(+). It participates in purine metabolism; IMP biosynthesis via de novo pathway; N(2)-formyl-N(1)-(5-phospho-D-ribosyl)glycinamide from N(1)-(5-phospho-D-ribosyl)glycinamide (formate route): step 1/1. Functionally, involved in the de novo purine biosynthesis. Catalyzes the transfer of formate to 5-phospho-ribosyl-glycinamide (GAR), producing 5-phospho-ribosyl-N-formylglycinamide (FGAR). Formate is provided by PurU via hydrolysis of 10-formyl-tetrahydrofolate. The polypeptide is Formate-dependent phosphoribosylglycinamide formyltransferase (Yersinia pseudotuberculosis serotype O:3 (strain YPIII)).